Here is a 376-residue protein sequence, read N- to C-terminus: Pyruvate dehydrogenase E1 component subunit beta-2, mitochondrial (376 aa).

A mitochondrion-targeting transit peptide spans 1-36 (MLGAARRQLGSGPMLGQVLRRLRPATAAAADAARAY). A thiamine diphosphate-binding site is contributed by glutamate 99. 4 residues coordinate K(+): isoleucine 152, alanine 200, isoleucine 201, and aspartate 203.

As to quaternary structure, tetramer of 2 alpha and 2 beta subunits. Thiamine diphosphate is required as a cofactor.

It localises to the mitochondrion matrix. It catalyses the reaction N(6)-[(R)-lipoyl]-L-lysyl-[protein] + pyruvate + H(+) = N(6)-[(R)-S(8)-acetyldihydrolipoyl]-L-lysyl-[protein] + CO2. Functionally, the pyruvate dehydrogenase complex catalyzes the overall conversion of pyruvate to acetyl-CoA and CO(2). It contains multiple copies of three enzymatic components: pyruvate dehydrogenase (E1), dihydrolipoamide acetyltransferase (E2) and lipoamide dehydrogenase (E3). This chain is Pyruvate dehydrogenase E1 component subunit beta-2, mitochondrial, found in Oryza sativa subsp. japonica (Rice).